The following is a 418-amino-acid chain: MTENILNSPGGMRSYLDSIAFQLEEIQDRIKGVFRQWAYRPIITPTLEYYESLTTGIGEKYKKQMYKFIDYEGNILALRPEMTAPIARTVANKIDELCLPQRLSYRAPVFRYEEPQTGKNREIYQIGVELIGEKSPGADAEVIMLAVESLKSSGLTDFQIDIGHAGFLNGVIEELKVTDSQGEQIKRWLNKKDMVSIRDFTSRVEIKNINKLLGIVRLRGKKEVLQRAKRLINNDKSKKALKDLELVYEYLCDYGVDNYVNFDLTLIRGFEYYTGIVFEAFTENLGYTICGGGRYDSLIYQYCGKEIPAIGFAIGIERVRLGLLNQGQELETPEIDVMVVFSYQARKPALEAIKKYRKQGLNVLQIEKEEVDQEFIKKHLKTGVKKIISFCEYSSNQKIKVIDDRGNIELLTPGGDLP.

It belongs to the class-II aminoacyl-tRNA synthetase family. HisZ subfamily. In terms of assembly, heteromultimer composed of HisG and HisZ subunits.

Its subcellular location is the cytoplasm. The protein operates within amino-acid biosynthesis; L-histidine biosynthesis; L-histidine from 5-phospho-alpha-D-ribose 1-diphosphate: step 1/9. Required for the first step of histidine biosynthesis. May allow the feedback regulation of ATP phosphoribosyltransferase activity by histidine. This Halothermothrix orenii (strain H 168 / OCM 544 / DSM 9562) protein is ATP phosphoribosyltransferase regulatory subunit.